The chain runs to 296 residues: Phosphatidylserine decarboxylase proenzyme (296 aa).

Active-site charge relay system; for autoendoproteolytic cleavage activity residues include aspartate 113, histidine 169, and serine 256. The active-site Schiff-base intermediate with substrate; via pyruvic acid; for decarboxylase activity is serine 256. Serine 256 carries the post-translational modification Pyruvic acid (Ser); by autocatalysis.

Belongs to the phosphatidylserine decarboxylase family. PSD-B subfamily. Prokaryotic type II sub-subfamily. As to quaternary structure, heterodimer of a large membrane-associated beta subunit and a small pyruvoyl-containing alpha subunit. Pyruvate is required as a cofactor. In terms of processing, is synthesized initially as an inactive proenzyme. Formation of the active enzyme involves a self-maturation process in which the active site pyruvoyl group is generated from an internal serine residue via an autocatalytic post-translational modification. Two non-identical subunits are generated from the proenzyme in this reaction, and the pyruvate is formed at the N-terminus of the alpha chain, which is derived from the carboxyl end of the proenzyme. The autoendoproteolytic cleavage occurs by a canonical serine protease mechanism, in which the side chain hydroxyl group of the serine supplies its oxygen atom to form the C-terminus of the beta chain, while the remainder of the serine residue undergoes an oxidative deamination to produce ammonia and the pyruvoyl prosthetic group on the alpha chain. During this reaction, the Ser that is part of the protease active site of the proenzyme becomes the pyruvoyl prosthetic group, which constitutes an essential element of the active site of the mature decarboxylase.

It localises to the cell membrane. The enzyme catalyses a 1,2-diacyl-sn-glycero-3-phospho-L-serine + H(+) = a 1,2-diacyl-sn-glycero-3-phosphoethanolamine + CO2. The protein operates within phospholipid metabolism; phosphatidylethanolamine biosynthesis; phosphatidylethanolamine from CDP-diacylglycerol: step 2/2. In terms of biological role, catalyzes the formation of phosphatidylethanolamine (PtdEtn) from phosphatidylserine (PtdSer). The chain is Phosphatidylserine decarboxylase proenzyme from Clostridium botulinum (strain Alaska E43 / Type E3).